A 359-amino-acid chain; its full sequence is Serine/threonine-protein phosphatase 2A activator 2 (359 aa).

It belongs to the PTPA-type PPIase family.

The protein localises to the cytoplasm. The enzyme catalyses [protein]-peptidylproline (omega=180) = [protein]-peptidylproline (omega=0). Functionally, PPIases accelerate the folding of proteins. It catalyzes the cis-trans isomerization of proline imidic peptide bonds in oligopeptides. Acts as a regulatory subunit for PP2A-like phosphatases modulating their activity or substrate specificity, probably by inducing a conformational change in the catalytic subunit, a direct target of the PPIase. Can reactivate inactive phosphatase PP2A-phosphatase methylesterase complexes (PP2Ai) in presence of ATP and Mg(2+) by dissociating the inactive form from the complex. The sequence is that of Serine/threonine-protein phosphatase 2A activator 2 (RRD2) from Eremothecium gossypii (strain ATCC 10895 / CBS 109.51 / FGSC 9923 / NRRL Y-1056) (Yeast).